A 428-amino-acid chain; its full sequence is MAKTKPILNVAFIGHVDAGKSTTVGRLLLDGGAIDPQLIVRLRKEAEEKGKAGFEFAYVMDGLKEERERGVTIDVAHKKFPTAKYEVTIVDCPGHRDFIKNMITGASQADAAVLVVNVDDAKSGIQPQTREHVFLIRTLGVRQLAVAVNKMDTVNFSEADYNELKKMIGDQLLKMIGFNPEQINFVPVASLHGDNVFKKSERTPWYKGPTIAEVIDGFQPPEKPTNLPLRLPIQDVYSITGVGTVPVGRVETGIIKPGDKVVFEPAGAIGEIKTVEMHHEQLPSAEPGDNIGFNVRGVGKKDIKRGDVLGHTTNPPTVATDFTAQIVVLQHPSVLTVGYTPVFHTHTAQIACTFAEIQKKLNPATGEVLEENPDFLKAGDAAIVKLIPTKPMVIESVKEIPQLGRFAIRDMGMTVAAGMAIQVTAKNK.

The region spanning 5-225 (KPILNVAFIG…DGFQPPEKPT (221 aa)) is the tr-type G domain. Positions 14–21 (GHVDAGKS) are G1. 14–21 (GHVDAGKS) is a binding site for GTP. S21 is a binding site for Mg(2+). Residues 70–74 (GVTID) are G2. Residues 91–94 (DCPG) are G3. GTP-binding positions include 91-95 (DCPGH) and 149-152 (NKMD). Residues 149–152 (NKMD) are G4. The tract at residues 189 to 191 (ASL) is G5.

It belongs to the TRAFAC class translation factor GTPase superfamily. Classic translation factor GTPase family. EF-Tu/EF-1A subfamily.

The protein resides in the cytoplasm. It catalyses the reaction GTP + H2O = GDP + phosphate + H(+). Its function is as follows. GTP hydrolase that promotes the GTP-dependent binding of aminoacyl-tRNA to the A-site of ribosomes during protein biosynthesis. The protein is Elongation factor 1-alpha of Methanococcus vannielii (strain ATCC 35089 / DSM 1224 / JCM 13029 / OCM 148 / SB).